The following is a 138-amino-acid chain: Histone H2AX (138 aa).

Positions 1 to 23 are disordered; sequence MSTTGKGGKAKGKTASSKQVSRS. Serine 2 bears the N-acetylserine mark. N6-acetyllysine occurs at positions 6, 9, 11, 13, and 18. Serine 123 carries the phosphoserine modification. Lysine 124 is covalently cross-linked (Glycyl lysine isopeptide (Lys-Gly) (interchain with G-Cter in ubiquitin)). Residues serine 125, serine 130, and serine 135 each carry the phosphoserine modification. A [ST]-Q motif motif is present at residues 135–136; that stretch reads SQ.

This sequence belongs to the histone H2A family. In terms of assembly, the nucleosome is a histone octamer containing two molecules each of H2A, H2B, H3 and H4 assembled in one H3-H4 heterotetramer and two H2A-H2B heterodimers. The octamer wraps approximately 147 bp of DNA. Monoubiquitination of Lys-124 gives a specific tag for epigenetic transcriptional repression. In terms of processing, acetylation occurs almost exclusively in the MAC.

It localises to the nucleus. The protein resides in the chromosome. Its function is as follows. Core component of nucleosome. Nucleosomes wrap and compact DNA into chromatin, limiting DNA accessibility to the cellular machineries which require DNA as a template. Histones thereby play a central role in transcription regulation, DNA repair, DNA replication and chromosomal stability. DNA accessibility is regulated via a complex set of post-translational modifications of histones, also called histone code, and nucleosome remodeling. The polypeptide is Histone H2AX (HTA1) (Tetrahymena pyriformis).